A 479-amino-acid chain; its full sequence is Ubiquinone biosynthesis monooxygenase COQ6, mitochondrial (479 aa).

It belongs to the UbiH/COQ6 family. As to quaternary structure, component of a multi-subunit COQ enzyme complex, composed of at least COQ3, COQ4, COQ5, COQ6, COQ7 and COQ9. It depends on FAD as a cofactor.

It localises to the mitochondrion inner membrane. It catalyses the reaction 4-hydroxy-3-(all-trans-decaprenyl)benzoate + 2 reduced [2Fe-2S]-[ferredoxin] + O2 + 2 H(+) = 3,4-dihydroxy-5-(all-trans-decaprenyl)benzoate + 2 oxidized [2Fe-2S]-[ferredoxin] + H2O. It carries out the reaction 2-methoxy-6-(all-trans-decaprenyl)phenol + 2 reduced [2Fe-2S]-[ferredoxin] + O2 + 2 H(+) = 2-methoxy-6-(all-trans-decaprenyl)benzene-1,4-diol + 2 oxidized [2Fe-2S]-[ferredoxin] + H2O. The protein operates within cofactor biosynthesis; ubiquinone biosynthesis. Functionally, FAD-dependent monooxygenase required for two non-consecutive steps during ubiquinone biosynthesis. Required for the C5-ring hydroxylation during ubiquinone biosynthesis by catalyzing the hydroxylation of 4-hydroxy-3-(all-trans-decaprenyl)benzoic acid to 3,4-dihydroxy-5-(all-trans-decaprenyl)benzoic acid. Also acts downstream of COQ4, for the C1-hydroxylation during ubiquinone biosynthesis by catalyzing the hydroxylation of 2-methoxy-6-(all-trans-decaprenyl)phenol to 2-methoxy-6-(all-trans-decaprenyl)benzene-1,4-diol. The electrons required for the hydroxylation reaction are funneled indirectly to coq6 from NADPH via a ferredoxin/ferredoxin reductase system. This Schizosaccharomyces pombe (strain 972 / ATCC 24843) (Fission yeast) protein is Ubiquinone biosynthesis monooxygenase COQ6, mitochondrial.